We begin with the raw amino-acid sequence, 354 residues long: Falstatin (354 aa).

Positions Met-1–Cys-21 are cleaved as a signal peptide. A BC loop; binds and inhibits the active site cavity of cysteine proteases motif is present at residues Leu-226 to Trp-236. The tract at residues Lys-274–Arg-317 is disordered. Residues Tyr-275–Pro-302 show a composition bias toward basic and acidic residues.

The protein belongs to the protease inhibitor I71 family. In terms of assembly, oligomer; probably composed of 10 monomers. During the liver stage, proteolytically cleaved.

It is found in the secreted. It localises to the cytoplasmic vesicle. Its subcellular location is the secretory vesicle. The protein localises to the microneme. The protein resides in the host cytoplasm. It is found in the parasitophorous vacuole lumen. Its function is as follows. Cysteine protease inhibitor. Required for the invasion of host erythrocytes by merozoites. In the mosquito vector, essential for the gliding motility of hemocoel sporozoites and, therefore, for salivary gland invasion and the subsequent transmission from the mosquito to the mammalian host. Required for the invasion of host hepatocytes. During the liver stage, may prevent host hepatocyte cell death likely by inhibiting host cysteine proteases. The protein is Falstatin of Plasmodium berghei (strain Anka).